Reading from the N-terminus, the 320-residue chain is Putative polysaccharide deacetylase (320 aa).

The NodB homology domain occupies 69–303 (RSIESCFEYG…ITSKEGVWVA (235 aa)).

The protein belongs to the polysaccharide deacetylase family. In terms of assembly, homodimer.

The protein resides in the prospore. Functionally, may deacetylate chitin. Required for spore formation. The protein is Putative polysaccharide deacetylase of Schizosaccharomyces pombe (strain 972 / ATCC 24843) (Fission yeast).